The chain runs to 302 residues: Beta-1,2-mannobiose phosphorylase (302 aa).

This sequence belongs to the glycosyl hydrolase 130 family. In terms of assembly, monomer.

It carries out the reaction beta-D-mannopyranosyl-(1-&gt;2)-D-mannopyranose + phosphate = alpha-D-mannose 1-phosphate + D-mannose. Its pathway is nucleotide-sugar biosynthesis; GDP-alpha-D-mannose biosynthesis. In terms of biological role, probably involved in a salvage pathway for GDP-D-mannose biosynthesis. Catalyzes the reversible phosphorolysis of 1,2-beta-oligomannan. In phosphorolytic reactions, prefers beta-1,2-mannobiose (beta-1,2-Man2) as substrate. Produces alpha-D-mannose 1-phosphate, which is the precursor of GDP-D-mannose. In Thermoanaerobacter sp. (strain X514), this protein is Beta-1,2-mannobiose phosphorylase.